The sequence spans 95 residues: Aspartyl/glutamyl-tRNA(Asn/Gln) amidotransferase subunit C (95 aa).

The protein belongs to the GatC family. As to quaternary structure, heterotrimer of A, B and C subunits.

It carries out the reaction L-glutamyl-tRNA(Gln) + L-glutamine + ATP + H2O = L-glutaminyl-tRNA(Gln) + L-glutamate + ADP + phosphate + H(+). The catalysed reaction is L-aspartyl-tRNA(Asn) + L-glutamine + ATP + H2O = L-asparaginyl-tRNA(Asn) + L-glutamate + ADP + phosphate + 2 H(+). Allows the formation of correctly charged Asn-tRNA(Asn) or Gln-tRNA(Gln) through the transamidation of misacylated Asp-tRNA(Asn) or Glu-tRNA(Gln) in organisms which lack either or both of asparaginyl-tRNA or glutaminyl-tRNA synthetases. The reaction takes place in the presence of glutamine and ATP through an activated phospho-Asp-tRNA(Asn) or phospho-Glu-tRNA(Gln). This Bartonella henselae (strain ATCC 49882 / DSM 28221 / CCUG 30454 / Houston 1) (Rochalimaea henselae) protein is Aspartyl/glutamyl-tRNA(Asn/Gln) amidotransferase subunit C.